The primary structure comprises 295 residues: MGDKRQRARVQGAWATPTKSQSAARPATPARSRPSQTPGPSWRSKEQQQCDRRFVFKEPQLVVRAAPEPRVIDREGVYEISLSPTGVSRVCLYPGFVDLKEADWILERLCQDVPWKQRMGIREDITYPQPRLTAWYGELPYTYSRVTMEPNPHWLPVLWTLKSRIEENTGHTFNSLLCNFYRDEKDSVDWHSDDEPSLGSCPVIASLSFGATRTFEMRKKPPPEENGDYTYVERVKIPLDHGTLLIMEGATQADWQHRVPKEYHSRERRVNLTFRTVYPDPRGAPGDTSAELPLR.

The disordered stretch occupies residues 1 to 48 (MGDKRQRARVQGAWATPTKSQSAARPATPARSRPSQTPGPSWRSKEQQ). A compositionally biased stretch (low complexity) spans 22–35 (SAARPATPARSRPS). Substrate contacts are provided by residues tryptophan 115 and 141–143 (YTY). Positions 172–278 (TFNSLLCNFY…RVNLTFRTVY (107 aa)) constitute a Fe2OG dioxygenase domain. Residue leucine 177 is modified to (4R)-5-hydroxyleucine; alternate. Leucine 177 carries the (4R)-5-oxoleucine; alternate modification. 179-181 (NFY) is a binding site for 2-oxoglutarate. Positions 191 and 193 each coordinate Fe cation. Position 194 (aspartate 194) interacts with substrate. Fe cation is bound at residue histidine 257. 2-oxoglutarate-binding positions include 269 to 275 (RVNLTFR) and arginine 275.

Belongs to the alkB family. Interacts with the ASCC complex composed of ASCC1, ASCC2 and ASCC3. Interacts directly with ASCC3, and is thereby recruited to the ASCC complex. Interacts with OTUD4; the interaction is direct. Interacts with USP7 and USP9X. The cofactor is Fe(2+). Post-translationally, ubiquitinated; undergoes 'Lys-48'-linked polyubiquitination. OTUD4 promotes USP7 and USP9X-dependent deubiquitination of 'Lys-48'-polyubiquitinated ALKBH3 promoting the repair of alkylated DNA lesions.

It is found in the nucleus. The protein localises to the cytoplasm. The enzyme catalyses an N(1)-methyladenosine in mRNA + 2-oxoglutarate + O2 = an adenosine in mRNA + formaldehyde + succinate + CO2. It catalyses the reaction a methylated nucleobase within DNA + 2-oxoglutarate + O2 = a nucleobase within DNA + formaldehyde + succinate + CO2. It carries out the reaction an N(1)-methyl-2'-deoxyadenosine in single-stranded DNA + 2-oxoglutarate + O2 = a 2'-deoxyadenosine in single-stranded DNA + formaldehyde + succinate + CO2 + H(+). The catalysed reaction is an N(3)-methyl-2'-deoxycytidine in single-stranded DNA + 2-oxoglutarate + O2 = a 2'-deoxycytidine in single-stranded DNA + formaldehyde + succinate + CO2 + H(+). The enzyme catalyses a 3,N(4)-etheno-2'-deoxycytidine in single-stranded DNA + 2-oxoglutarate + O2 + H2O = a 2'-deoxycytidine in single-stranded DNA + glyoxal + succinate + CO2. With respect to regulation, activated by ascorbate. Functionally, dioxygenase that mediates demethylation of DNA and RNA containing 1-methyladenosine (m1A). Repairs alkylated DNA containing 1-methyladenosine (m1A) and 3-methylcytosine (m3C) by oxidative demethylation. Has a strong preference for single-stranded DNA. Able to process alkylated m3C within double-stranded regions via its interaction with ASCC3, which promotes DNA unwinding to generate single-stranded substrate needed for ALKBH3. Can repair exocyclic 3,N4-ethenocytosine adducs in single-stranded DNA. Also acts on RNA. Demethylates N(1)-methyladenosine (m1A) RNA, an epigenetic internal modification of messenger RNAs (mRNAs) highly enriched within 5'-untranslated regions (UTRs) and in the vicinity of start codons. Requires molecular oxygen, alpha-ketoglutarate and iron. This Rattus norvegicus (Rat) protein is Alpha-ketoglutarate-dependent dioxygenase alkB homolog 3.